The sequence spans 3092 residues: Probable polyketide synthase 45 (3092 aa).

Positions 10–430 constitute a Ketosynthase family 3 (KS3) domain; that stretch reads DNDVAIIGIG…GSNVCLILTE (421 aa). Residues C170, H315, and H353 each act as for beta-ketoacyl synthase activity in the active site. The acyl/malonyl transferase stretch occupies residues 640 to 673; it reads GILASISIGHSLGEVSSAVCSGMIDLETGCFIIY. The active-site For acyl/malonyl transferase activity is the S650. An N-terminal hotdog fold region spans residues 967 to 1087; that stretch reads INQLGNRNER…GKFSITKHND (121 aa). Residues 967-1254 enclose the PKS/mFAS DH domain; it reads INQLGNRNER…YTQLTPYKNQ (288 aa). Catalysis depends on H999, which acts as the Proton acceptor; for dehydratase activity. Residues 1103 to 1254 are C-terminal hotdog fold; the sequence is NFVTIQKKEL…YTQLTPYKNQ (152 aa). D1165 acts as the Proton donor; for dehydratase activity in catalysis. Residues 2566–2644 form the Carrier domain; that stretch reads SDDLSIREEI…QLIQSVTDAM (79 aa). An O-(pantetheine 4'-phosphoryl)serine modification is found at S2604. A helical membrane pass occupies residues 2705–2725; that stretch reads NTVFLTGSSGFIGIYILFYLI.

Pantetheine 4'-phosphate serves as cofactor.

It is found in the membrane. In terms of biological role, probable polyketide synthase. This chain is Probable polyketide synthase 45 (pks45), found in Dictyostelium discoideum (Social amoeba).